We begin with the raw amino-acid sequence, 223 residues long: 3,4-dihydroxy-2-butanone 4-phosphate synthase (223 aa).

Residues 39-40, D44, 152-156, and E176 contribute to the D-ribulose 5-phosphate site; these read RE and RRGHT. Residue E40 coordinates Mg(2+). Residue H155 coordinates Mg(2+).

This sequence belongs to the DHBP synthase family. Homodimer. Mg(2+) serves as cofactor. Requires Mn(2+) as cofactor.

It catalyses the reaction D-ribulose 5-phosphate = (2S)-2-hydroxy-3-oxobutyl phosphate + formate + H(+). Its pathway is cofactor biosynthesis; riboflavin biosynthesis; 2-hydroxy-3-oxobutyl phosphate from D-ribulose 5-phosphate: step 1/1. Its function is as follows. Catalyzes the conversion of D-ribulose 5-phosphate to formate and 3,4-dihydroxy-2-butanone 4-phosphate. In Desulfovibrio desulfuricans (strain ATCC 27774 / DSM 6949 / MB), this protein is 3,4-dihydroxy-2-butanone 4-phosphate synthase.